Reading from the N-terminus, the 1166-residue chain is MPTSMLWAVDLFGRVYTLSTAGQYWELCKDVQLEFKRVSAATQCCWGIACDNQVYLYVCSSDVPIRHREEAYENQRWNPMGGFCEKLLPSDRWSWSDVSGLQHRPLDGVALPSPYWEWESDWYVDENFGGEPTEKGGWTYAMDFPATYTRDKKWNSCVRRRKWIRYRRYKSRDTWAKIPSKDDPKELPDPFNDLSVGGWEITEEPVGRLSVWAVSLQGKVWYRENVSHPNPEGSSWSLVDTPGEVVQISCGPHDLIWATLWEGQALVREGICRNNPKGNSWSIVEPPGSENGIMHVSAGVSVVWAITKDRKVWFRRGVNSHNPCGTSWIEMVGEMTMVNVGLNDQVWGISCEDRAVYFRQGVTPSELSGKTWKAIVVGRESDRSHSGSSSSLLSAGCFFGEEVRGSGTESAPSDTDASSEVERQGPERSLPKESLDNSRNLKGSSSKGHESTRNTEDPMENACLAEGQAKAPKTSGPDECHGPAPTPAELPWTNIDLKEPKKASNQPAAGFPETSGLSSLGLFPMGMEEPYGADDHPLWAWVSGGGCAVEAGSALKWFTVQSGLSPSVQTLSLSITPAQTAAWRKQIFQQLTERTKRELESFRHYEQAVEQSVWVKTGALQWWCDWKPHKWVDVRVALEQFTGHDGARDSILFIYYVVHEEKKYLHVFLNEVTVLVPVLNEAKHSFALYTPERTRQRWPVRLAATTEQDMNDWLTLLSLSCCESRKVHGRPSLQAIWSVTCKGDIFVSEPSPDLEAHEHLLPCDQMFWRQMGGHLRIIEANSRGVVWGIGYDHTAWVYTGGYGGGCFQGLASSTSNIYTQSDVKSVYIYENQRWNPVTGYTSRGLPTDRYMWSDVTGLQECTKAGTKPPSLQWTWVSDWYVDFSVLGGTDQEGWQYASDFPASYHGYKTMKDFVRRRCWARKCKLVTSGPWLEVAPIALSDVSIIPESADANGRGHNIALWAVSDKGDVLCRLGVSELNPAGSSWLHVGTDQPFASVSIGACYQVWAVARDGSAFYRGSVSPSQPAGDCWYHIPSPPKQKLTQVSVGQTSVYALDENGNLWYRAGITPSYPQGSSWEHVSNNVRKVSVGPLDQVWVIANKVQGSHGLSRGTVCRRMGVQPREPKGQGWDYGIGGGWDHISVRANATRAPRNMSRDQEAHGPGPVCC.

TECPR repeat units lie at residues 209–240 (LSVW…SLVD), 254–285 (DLIW…SIVE), 301–332 (SVVW…IEMV), and 344–376 (DQVW…KAIV). Serine 386, serine 388, serine 391, serine 413, and serine 418 each carry phosphoserine. The disordered stretch occupies residues 403–492 (VRGSGTESAP…PAPTPAELPW (90 aa)). Residues 407–418 (GTESAPSDTDAS) are compositionally biased toward polar residues. Residues 420–436 (EVERQGPERSLPKESLD) are compositionally biased toward basic and acidic residues. Positions 437 to 446 (NSRNLKGSSS) are enriched in polar residues. Residues 447–456 (KGHESTRNTE) show a composition bias toward basic and acidic residues. The PH domain occupies 616-722 (KTGALQWWCD…WLTLLSLSCC (107 aa)). The stretch at 734–761 (QAIWSVTCKGDIFVSEPSPDLEAHEHLL) is one TECPR 5 repeat. Phosphoserine is present on serine 943. TECPR repeat units lie at residues 958–989 (IALW…LHVG), 1003–1034 (YQVW…YHIP), 1049–1080 (TSVY…EHVS), and 1092–1132 (DQVW…DYGI). The segment at 1147–1166 (RAPRNMSRDQEAHGPGPVCC) is disordered.

This sequence belongs to the TECPR1 family. Interacts with ATG5; the interaction is direct. Interacts with WIPI2. Interacts with the ATG5-ATG12 conjugate, the interaction is however mutually exclusive with ATG16, since it does not interact with ATG12-ATG5-ATG16 complex.

The protein localises to the cytoplasmic vesicle. Its subcellular location is the autophagosome membrane. The protein resides in the lysosome membrane. Functionally, tethering factor involved in autophagy. Involved in autophagosome maturation by promoting the autophagosome fusion with lysosomes: acts by associating with both the ATG5-ATG12 conjugate and phosphatidylinositol-3-phosphate (PtdIns(3)P) present at the surface of autophagosomes. Also involved in selective autophagy against bacterial pathogens, by being required for phagophore/preautophagosomal structure biogenesis and maturation. The polypeptide is Tectonin beta-propeller repeat-containing protein 1 (Tecpr1) (Rattus norvegicus (Rat)).